We begin with the raw amino-acid sequence, 66 residues long: Small vasohibin-binding protein (66 aa).

A compositionally biased stretch (basic and acidic residues) spans methionine 1–lysine 23. A disordered region spans residues methionine 1–glutamate 30. Residues alanine 5–glutamine 52 adopt a coiled-coil conformation.

Belongs to the SVBP family. Interacts with VASH1 and VASH2. Highly expressed in bone marrow, spleen and testis.

It localises to the cytoplasm. The protein resides in the secreted. Its subcellular location is the cytoskeleton. Functionally, enhances the tyrosine carboxypeptidase activity of VASH1 and VASH2, thereby promoting the removal of the C-terminal tyrosine residue of alpha-tubulin. Also required to enhance the solubility and secretion of VASH1 and VASH2. Plays a role in axon and excitatory synapse formation. The polypeptide is Small vasohibin-binding protein (Mus musculus (Mouse)).